Reading from the N-terminus, the 262-residue chain is Global transcriptional regulator CodY (262 aa).

Positions 1 to 159 (MAHLLEKTRK…ASTVVGIQLL (159 aa)) are GAF domain. Residues 207 to 226 (ASVIADRIGITRSVIVNALR) constitute a DNA-binding region (H-T-H motif).

Belongs to the CodY family.

It is found in the cytoplasm. Functionally, DNA-binding global transcriptional regulator which is involved in the adaptive response to starvation and acts by directly or indirectly controlling the expression of numerous genes in response to nutrient availability. During rapid exponential growth, CodY is highly active and represses genes whose products allow adaptation to nutrient depletion. The sequence is that of Global transcriptional regulator CodY from Streptococcus pneumoniae (strain JJA).